Here is a 354-residue protein sequence, read N- to C-terminus: GTPase Obg (354 aa).

The 159-residue stretch at 1–159 (MKFVDEVKIH…RDLVLELKLL (159 aa)) folds into the Obg domain. In terms of domain architecture, OBG-type G spans 160-333 (ADVGIVGYPN…LLDAVGRALF (174 aa)). Residues 166-173 (GYPNAGKS), 191-195 (FTTLT), 212-215 (DIPG), 283-286 (TKID), and 314-316 (SAV) contribute to the GTP site. Residues Ser173 and Thr193 each coordinate Mg(2+).

Belongs to the TRAFAC class OBG-HflX-like GTPase superfamily. OBG GTPase family. Monomer. Requires Mg(2+) as cofactor.

The protein resides in the cytoplasm. In terms of biological role, an essential GTPase which binds GTP, GDP and possibly (p)ppGpp with moderate affinity, with high nucleotide exchange rates and a fairly low GTP hydrolysis rate. Plays a role in control of the cell cycle, stress response, ribosome biogenesis and in those bacteria that undergo differentiation, in morphogenesis control. The sequence is that of GTPase Obg from Anaeromyxobacter dehalogenans (strain 2CP-1 / ATCC BAA-258).